The chain runs to 153 residues: 6,7-dimethyl-8-ribityllumazine synthase (153 aa).

5-amino-6-(D-ribitylamino)uracil contacts are provided by residues Phe22, Ala56–Glu58, and Thr80–Ile82. Ser85–Thr86 is a (2S)-2-hydroxy-3-oxobutyl phosphate binding site. The Proton donor role is filled by His88. A 5-amino-6-(D-ribitylamino)uracil-binding site is contributed by Phe113. Position 127 (Arg127) interacts with (2S)-2-hydroxy-3-oxobutyl phosphate.

It belongs to the DMRL synthase family. In terms of assembly, forms an icosahedral capsid composed of 60 subunits, arranged as a dodecamer of pentamers.

The catalysed reaction is (2S)-2-hydroxy-3-oxobutyl phosphate + 5-amino-6-(D-ribitylamino)uracil = 6,7-dimethyl-8-(1-D-ribityl)lumazine + phosphate + 2 H2O + H(+). It participates in cofactor biosynthesis; riboflavin biosynthesis; riboflavin from 2-hydroxy-3-oxobutyl phosphate and 5-amino-6-(D-ribitylamino)uracil: step 1/2. Catalyzes the formation of 6,7-dimethyl-8-ribityllumazine by condensation of 5-amino-6-(D-ribitylamino)uracil with 3,4-dihydroxy-2-butanone 4-phosphate. This is the penultimate step in the biosynthesis of riboflavin. This is 6,7-dimethyl-8-ribityllumazine synthase from Actinobacillus pleuropneumoniae serotype 5b (strain L20).